We begin with the raw amino-acid sequence, 156 residues long: Small ribosomal subunit protein uS7 (156 aa).

It belongs to the universal ribosomal protein uS7 family. In terms of assembly, part of the 30S ribosomal subunit. Contacts proteins S9 and S11.

Its function is as follows. One of the primary rRNA binding proteins, it binds directly to 16S rRNA where it nucleates assembly of the head domain of the 30S subunit. Is located at the subunit interface close to the decoding center, probably blocks exit of the E-site tRNA. This chain is Small ribosomal subunit protein uS7, found in Polynucleobacter necessarius subsp. necessarius (strain STIR1).